Reading from the N-terminus, the 354-residue chain is Lysine racemase (354 aa).

Position 36 is an N6-(pyridoxal phosphate)lysine (Lys-36).

The protein belongs to the alanine racemase family. In terms of assembly, homodimer. The cofactor is pyridoxal 5'-phosphate.

The enzyme catalyses L-lysine = D-lysine. It catalyses the reaction L-ornithine = D-ornithine. It participates in cell wall biogenesis; peptidoglycan biosynthesis. Catalyzes the interconversion of D-lysine and L-lysine. Has also high activity toward ornithine, and weaker activity toward alanine. Contributes to production of D-lysine and D-alanine for use as peptidoglycan components. In Thermotoga maritima (strain ATCC 43589 / DSM 3109 / JCM 10099 / NBRC 100826 / MSB8), this protein is Lysine racemase.